Consider the following 463-residue polypeptide: ATP-dependent protease ATPase subunit HslU (463 aa).

ATP-binding positions include I19, 61 to 66 (GVGKTE), D277, E341, and R413.

This sequence belongs to the ClpX chaperone family. HslU subfamily. As to quaternary structure, a double ring-shaped homohexamer of HslV is capped on each side by a ring-shaped HslU homohexamer. The assembly of the HslU/HslV complex is dependent on binding of ATP.

It localises to the cytoplasm. Functionally, ATPase subunit of a proteasome-like degradation complex; this subunit has chaperone activity. The binding of ATP and its subsequent hydrolysis by HslU are essential for unfolding of protein substrates subsequently hydrolyzed by HslV. HslU recognizes the N-terminal part of its protein substrates and unfolds these before they are guided to HslV for hydrolysis. In Bacillus anthracis (strain A0248), this protein is ATP-dependent protease ATPase subunit HslU.